The chain runs to 460 residues: Bifunctional protein GlmU (460 aa).

The interval 1 to 235 (MALSAAIVLA…PLTVEGVNDR (235 aa)) is pyrophosphorylase. UDP-N-acetyl-alpha-D-glucosamine contacts are provided by residues 9-12 (LAAG), lysine 23, glutamine 76, and 81-82 (GT). Aspartate 109 is a binding site for Mg(2+). Positions 146, 161, 176, and 233 each coordinate UDP-N-acetyl-alpha-D-glucosamine. Residue asparagine 233 participates in Mg(2+) binding. Positions 236–256 (VQLAALSKTYNRRVCERWMRD) are linker. The tract at residues 257–460 (GVTILDPETT…VEGWKPAWER (204 aa)) is N-acetyltransferase. Arginine 338 and lysine 356 together coordinate UDP-N-acetyl-alpha-D-glucosamine. Catalysis depends on histidine 368, which acts as the Proton acceptor. UDP-N-acetyl-alpha-D-glucosamine contacts are provided by tyrosine 371 and asparagine 382. Acetyl-CoA is bound by residues 391 to 392 (NY) and alanine 428.

This sequence in the N-terminal section; belongs to the N-acetylglucosamine-1-phosphate uridyltransferase family. The protein in the C-terminal section; belongs to the transferase hexapeptide repeat family. As to quaternary structure, homotrimer. Mg(2+) serves as cofactor.

It localises to the cytoplasm. It carries out the reaction alpha-D-glucosamine 1-phosphate + acetyl-CoA = N-acetyl-alpha-D-glucosamine 1-phosphate + CoA + H(+). The enzyme catalyses N-acetyl-alpha-D-glucosamine 1-phosphate + UTP + H(+) = UDP-N-acetyl-alpha-D-glucosamine + diphosphate. Its pathway is nucleotide-sugar biosynthesis; UDP-N-acetyl-alpha-D-glucosamine biosynthesis; N-acetyl-alpha-D-glucosamine 1-phosphate from alpha-D-glucosamine 6-phosphate (route II): step 2/2. The protein operates within nucleotide-sugar biosynthesis; UDP-N-acetyl-alpha-D-glucosamine biosynthesis; UDP-N-acetyl-alpha-D-glucosamine from N-acetyl-alpha-D-glucosamine 1-phosphate: step 1/1. It functions in the pathway bacterial outer membrane biogenesis; LPS lipid A biosynthesis. Catalyzes the last two sequential reactions in the de novo biosynthetic pathway for UDP-N-acetylglucosamine (UDP-GlcNAc). The C-terminal domain catalyzes the transfer of acetyl group from acetyl coenzyme A to glucosamine-1-phosphate (GlcN-1-P) to produce N-acetylglucosamine-1-phosphate (GlcNAc-1-P), which is converted into UDP-GlcNAc by the transfer of uridine 5-monophosphate (from uridine 5-triphosphate), a reaction catalyzed by the N-terminal domain. The sequence is that of Bifunctional protein GlmU from Bifidobacterium longum (strain NCC 2705).